A 37-amino-acid polypeptide reads, in one-letter code: Large ribosomal subunit protein bL36 (37 aa).

This sequence belongs to the bacterial ribosomal protein bL36 family.

The sequence is that of Large ribosomal subunit protein bL36 from Gloeothece citriformis (strain PCC 7424) (Cyanothece sp. (strain PCC 7424)).